We begin with the raw amino-acid sequence, 269 residues long: C-type lectin domain family 2 member G (269 aa).

Residues 1–107 are Cytoplasmic-facing; sequence MNITRASLPM…SPESSAKLYC (107 aa). A helical; Signal-anchor for type II membrane protein transmembrane segment spans residues 108-128; it reads CCGVIMVLTVAVVALSVALPA. The Extracellular segment spans residues 129–269; that stretch reads TKTEQILINK…SLHCPTPVPV (141 aa). The region spanning 150–254 is the C-type lectin domain; the sequence is VGNKCFYFSE…HYIPRIWICS (105 aa). The N-linked (GlcNAc...) asparagine glycan is linked to Asn-163. Cys-171 and Cys-253 are oxidised to a cystine.

As to expression, detected in vagina, eye, tongue, stomach and spleen.

It is found in the cell membrane. Its function is as follows. Inhibits osteoclast formation. The sequence is that of C-type lectin domain family 2 member G (Clec2g) from Mus musculus (Mouse).